Consider the following 183-residue polypeptide: Dual-action ribosomal maturation protein DarP (183 aa).

Belongs to the DarP family.

It localises to the cytoplasm. Member of a network of 50S ribosomal subunit biogenesis factors which assembles along the 30S-50S interface, preventing incorrect 23S rRNA structures from forming. Promotes peptidyl transferase center (PTC) maturation. This chain is Dual-action ribosomal maturation protein DarP, found in Citrobacter koseri (strain ATCC BAA-895 / CDC 4225-83 / SGSC4696).